The chain runs to 541 residues: GMP synthase [glutamine-hydrolyzing] (541 aa).

One can recognise a Glutamine amidotransferase type-1 domain in the interval 15–209; it reads TILTLDFGSQ…AVNICGCKQN (195 aa). Catalysis depends on cysteine 91, which acts as the Nucleophile. Catalysis depends on residues histidine 183 and glutamate 185. The region spanning 210–416 is the GMPS ATP-PPase domain; the sequence is WTMARFVDQE…LGIAHEMVMR (207 aa). 238-244 lines the ATP pocket; sequence SGGVDST. The XMP site is built by arginine 311, aspartate 478, lysine 533, and glutamate 539.

In terms of assembly, homodimer. Mg(2+) serves as cofactor.

Its subcellular location is the cytoplasm. The protein localises to the cytosol. The catalysed reaction is XMP + L-glutamine + ATP + H2O = GMP + L-glutamate + AMP + diphosphate + 2 H(+). The protein operates within purine metabolism; GMP biosynthesis; GMP from XMP (L-Gln route): step 1/1. Its function is as follows. Catalyzes the conversion of xanthine monophosphate (XMP) to GMP in the presence of glutamine and ATP through an adenyl-XMP intermediate. The sequence is that of GMP synthase [glutamine-hydrolyzing] (gua1) from Aspergillus oryzae (strain ATCC 42149 / RIB 40) (Yellow koji mold).